We begin with the raw amino-acid sequence, 420 residues long: Chaperone protein dnaJ 3 (420 aa).

The 62-residue stretch at 14–75 folds into the J domain; that stretch reads KFYEILGVPK…EKREIYDQYG (62 aa). The segment at 135–219 adopts a CR-type zinc-finger fold; it reads GTMKKLSLSR…CKGDKVIPEK (85 aa). Positions 148, 151, 164, 167, 191, 194, 207, and 210 each coordinate Zn(2+). CXXCXGXG motif repeat units lie at residues 148 to 155, 164 to 171, 191 to 198, and 207 to 214; these read CSKCNGKG, CGGCQGSG, CNECKGTG, and CPQCKGDK. The segment at 376-420 is disordered; sequence ETTLHDVNIEDEMRRKAQAQREAYDDDDEDDDHPGGAQRVQCAQQ. Residues 377–390 are compositionally biased toward basic and acidic residues; the sequence is TTLHDVNIEDEMRR. Cysteine methyl ester is present on Cys417. Cys417 carries S-farnesyl cysteine lipidation. A propeptide spans 418 to 420 (removed in mature form); it reads AQQ.

Belongs to the DnaJ family. A/I subfamily. As to quaternary structure, homodimer. Zn(2+) is required as a cofactor. In terms of processing, farnesylated. As to expression, roots, shoots, flowers, siliques and cotyledons.

It localises to the membrane. Plays a continuous role in plant development probably in the structural organization of compartments. The polypeptide is Chaperone protein dnaJ 3 (ATJ3) (Arabidopsis thaliana (Mouse-ear cress)).